The chain runs to 127 residues: Glycine cleavage system H protein (127 aa).

Positions 22-104 (KVRIGITDFA…YEKAWMIVIE (83 aa)) constitute a Lipoyl-binding domain. An N6-lipoyllysine modification is found at lysine 63.

Belongs to the GcvH family. As to quaternary structure, the glycine cleavage system is composed of four proteins: P, T, L and H. Requires (R)-lipoate as cofactor.

Functionally, the glycine cleavage system catalyzes the degradation of glycine. The H protein shuttles the methylamine group of glycine from the P protein to the T protein. Its function is as follows. Is also involved in protein lipoylation via its role as an octanoyl/lipoyl carrier protein intermediate. In Geobacillus thermodenitrificans (strain NG80-2), this protein is Glycine cleavage system H protein.